Consider the following 410-residue polypeptide: Cytochrome P450 CYP107DY1 (410 aa).

Positions 106 and 110 each coordinate heme. Thr249 and Glu253 together coordinate substrate. Heme-binding residues include Arg302, His358, and Cys360.

This sequence belongs to the cytochrome P450 family. Heme is required as a cofactor.

It carries out the reaction mevastatin + 2 reduced [2Fe-2S]-[ferredoxin] + O2 + 2 H(+) = pravastatin lactone + 2 oxidized [2Fe-2S]-[ferredoxin] + H2O. Functionally, cytochrome P450 whose physiological substrate is unknown. In vitro, is able to catalyze the selective hydroxylation of mevastatin to pravastatin, the widely used therapeutic agent for hypercholesterolemia. This chain is Cytochrome P450 CYP107DY1, found in Priestia megaterium (strain ATCC 12872 / QMB1551) (Bacillus megaterium).